Reading from the N-terminus, the 130-residue chain is MLGGGSDAGLATAAARGQVETVRQLLEAGADPNAVNRFGRRPIQVMMMGSAQVAELLLLHGAEPNCADPATLTRPVHDAAREGFLDTLMVLHKAGARLDVCDAWGRLPVDLAEEQGHRDIARYLHAATGD.

ANK repeat units follow at residues 5 to 34 (GSDAGLATAAARGQVETVRQLLEAGADPNA), 38 to 66 (FGRRPIQVMMMGSAQVAELLLLHGAEPNC), 71 to 100 (TLTRPVHDAAREGFLDTLMVLHKAGARLDV), and 104 to 130 (WGRLPVDLAEEQGHRDIARYLHAATGD). Thr12 bears the Phosphothreonine mark.

This sequence belongs to the CDKN2 cyclin-dependent kinase inhibitor family. In terms of assembly, heterodimer of CDKN2B with CDK4 or CDK6. In terms of tissue distribution, expression abundant in lung, less abundant in testis, barely detectable in liver, and not detectable in neonatal kidney, adult kidney, brain, heart, or spleen.

Functionally, interacts strongly with CDK4 and CDK6. Potent inhibitor. Potential effector of TGF-beta induced cell cycle arrest. The chain is Cyclin-dependent kinase 4 inhibitor B (Cdkn2b) from Rattus norvegicus (Rat).